The primary structure comprises 199 residues: IMP cyclohydrolase (199 aa).

This sequence belongs to the archaeal IMP cyclohydrolase family.

It carries out the reaction IMP + H2O = 5-formamido-1-(5-phospho-D-ribosyl)imidazole-4-carboxamide. Its pathway is purine metabolism; IMP biosynthesis via de novo pathway; IMP from 5-formamido-1-(5-phospho-D-ribosyl)imidazole-4-carboxamide: step 1/1. In terms of biological role, catalyzes the cyclization of 5-formylamidoimidazole-4-carboxamide ribonucleotide to IMP. This Methanothrix thermoacetophila (strain DSM 6194 / JCM 14653 / NBRC 101360 / PT) (Methanosaeta thermophila) protein is IMP cyclohydrolase.